Consider the following 85-residue polypeptide: MFLPIIFHTILTLLNFGKYYCLPIQEDDDKSGKEIEQILDNNIESLGLLLNSMSLSSNFTTGDPELDSLFQDDLIPELYSVLDGF.

This is an uncharacterized protein from Saccharomyces cerevisiae (strain ATCC 204508 / S288c) (Baker's yeast).